The chain runs to 507 residues: Ribose import ATP-binding protein RbsA 2 (507 aa).

2 ABC transporter domains span residues 7–245 and 249–498; these read FSLD…VGRN and LFTR…MPQS. 39–46 contributes to the ATP binding site; sequence GENGAGKS.

It belongs to the ABC transporter superfamily. Ribose importer (TC 3.A.1.2.1) family. As to quaternary structure, the complex is composed of an ATP-binding protein (RbsA), two transmembrane proteins (RbsC) and a solute-binding protein (RbsB).

It is found in the cell inner membrane. It carries out the reaction D-ribose(out) + ATP + H2O = D-ribose(in) + ADP + phosphate + H(+). In terms of biological role, part of the ABC transporter complex RbsABC involved in ribose import. Responsible for energy coupling to the transport system. The polypeptide is Ribose import ATP-binding protein RbsA 2 (Mesorhizobium japonicum (strain LMG 29417 / CECT 9101 / MAFF 303099) (Mesorhizobium loti (strain MAFF 303099))).